A 131-amino-acid polypeptide reads, in one-letter code: Synaptobrevin-like protein (131 aa).

Topologically, residues 1 to 81 (MLHITTMTDK…KRKFWWKNCK (81 aa)) are cytoplasmic. The v-SNARE coiled-coil homology domain occupies 18–78 (RLQQTQAQVN…GKLKRKFWWK (61 aa)). The chain crosses the membrane as a helical; Anchor for type IV membrane protein span at residues 82-102 (MLAVLGVLVVILIIVLIVWVV). Over 103-131 (SEQKNKVEQSEHSSHHLVMDNSSHLLSEQ) the chain is Vesicular. Residues 112 to 131 (SEHSSHHLVMDNSSHLLSEQ) form a disordered region. Polar residues predominate over residues 122–131 (DNSSHLLSEQ).

Belongs to the synaptobrevin family.

The protein resides in the cytoplasmic vesicle. Its subcellular location is the secretory vesicle. It localises to the synaptic vesicle membrane. It is found in the synapse. The protein localises to the synaptosome. Functionally, unknown, but synaptobrevins are presumed to be involved in targeting and fusion of synaptic vesicles with the presynaptic membrane as well as in neurotransmitter release. This is Synaptobrevin-like protein from Schistosoma mansoni (Blood fluke).